The chain runs to 237 residues: tRNA1(Val) (adenine(37)-N6)-methyltransferase (237 aa).

The protein belongs to the methyltransferase superfamily. tRNA (adenine-N(6)-)-methyltransferase family.

The protein resides in the cytoplasm. It catalyses the reaction adenosine(37) in tRNA1(Val) + S-adenosyl-L-methionine = N(6)-methyladenosine(37) in tRNA1(Val) + S-adenosyl-L-homocysteine + H(+). Its function is as follows. Specifically methylates the adenine in position 37 of tRNA(1)(Val) (anticodon cmo5UAC). The polypeptide is tRNA1(Val) (adenine(37)-N6)-methyltransferase (Parabacteroides distasonis (strain ATCC 8503 / DSM 20701 / CIP 104284 / JCM 5825 / NCTC 11152)).